Consider the following 169-residue polypeptide: Cell division inhibitor SulA (169 aa).

The tract at residues 106–112 (ALRTGNY) is ftsZ binding. The tract at residues 162–169 (KIHSNLYH) is lon protease binding.

The protein belongs to the SulA family. Interacts with FtsZ. In terms of processing, is rapidly cleaved and degraded by the Lon protease once DNA damage is repaired.

Its function is as follows. Component of the SOS system and an inhibitor of cell division. Accumulation of SulA causes rapid cessation of cell division and the appearance of long, non-septate filaments. In the presence of GTP, binds a polymerization-competent form of FtsZ in a 1:1 ratio, thus inhibiting FtsZ polymerization and therefore preventing it from participating in the assembly of the Z ring. This mechanism prevents the premature segregation of damaged DNA to daughter cells during cell division. The chain is Cell division inhibitor SulA from Citrobacter koseri (strain ATCC BAA-895 / CDC 4225-83 / SGSC4696).